The primary structure comprises 688 residues: Collagen alpha-2(IX) chain (688 aa).

A signal peptide spans 1 to 22 (MTAVPAPRSLFVLLQVLWLALA). The tract at residues 26-162 (GPPGEPGPPG…PGKPGRPGTI (137 aa)) is triple-helical region 4 (COL4). Positions 26 to 171 (GPPGEPGPPG…IQGLEGSADF (146 aa)) are disordered. Composition is skewed to pro residues over residues 28 to 42 (PGEP…PPGV) and 105 to 126 (LPGP…PGPV). The span at 128 to 137 (LPGEIGTPGP) shows a compositional bias: low complexity. Residues 138-156 (KGDPGPEGPSGPPGPPGKP) show a composition bias toward pro residues. The residue at position 159 (Pro-159) is a 4-hydroxyproline. The nonhelical region 4 (NC4) stretch occupies residues 163-179 (QGLEGSADFLCPTNCPA). The O-linked (Xyl...) (glycosaminoglycan) serine glycan is linked to Ser-168. Positions 180–518 (GVKGPQGLQG…PGRQGVVGRA (339 aa)) are triple-helical region 3 (COL3). Lys-182 is modified (5-hydroxylysine). Lys-182 is a glycosylation site (O-linked (Gal...) hydroxylysine). Residues 183–517 (GPQGLQGVKG…QPGRQGVVGR (335 aa)) are disordered. 2 stretches are compositionally biased toward low complexity: residues 289–314 (PQGI…PGIP) and 392–412 (RGPV…EQGP). The span at 435 to 444 (GPRGGVGDPG) shows a compositional bias: gly residues. Residues 502-517 (DRGVPGQPGRQGVVGR) are compositionally biased toward low complexity. The tract at residues 519–548 (ASDQHIVDVVLKMIQEQLAEVAVSAKREAL) is nonhelical region 3 (NC3). The tract at residues 549–631 (GAAGMVGLPG…PGLPGRPGQA (83 aa)) is triple-helical region 2 (COL2). Residues 553–664 (MVGLPGPPGP…GPVGLPGFCE (112 aa)) form a disordered region. The segment covering 598 to 610 (KRGEKGDRGEMGH) has biased composition (basic and acidic residues). The nonhelical region 2 (NC2) stretch occupies residues 632–633 (IN). The tract at residues 634–663 (GKDGDRGSPGAPGEAGRPGRPGPVGLPGFC) is triple-helical region 1 (COL1). The nonhelical region 1 (NC1) stretch occupies residues 664–688 (EPAACLGASAYTSARLTEPGSIKGP).

The protein belongs to the fibril-associated collagens with interrupted helices (FACIT) family. Heterotrimer of an alpha 1(IX), an alpha 2(IX) and an alpha 3(IX) chain. The chains are linked to each other by interchain disulfide bonds. Trimers are also cross-linked via hydroxylysines. Post-translationally, covalently linked to the telopeptides of type II collagen by lysine-derived cross-links. In terms of processing, prolines at the third position of the tripeptide repeating unit (G-X-Y) are hydroxylated in some or all of the chains.

The protein resides in the secreted. Its subcellular location is the extracellular space. The protein localises to the extracellular matrix. Functionally, structural component of hyaline cartilage and vitreous of the eye. This is Collagen alpha-2(IX) chain (Col9a2) from Mus musculus (Mouse).